The following is a 170-amino-acid chain: MSNPEEITEVVEVAADEYVSVEEPEVAEDIEAAAAPQAPIVIDRPIQTVGRRKEAVVRVRLTPGSGDFKLNGRTIEDYFPNKVHQQLIKAPLVTVERAESFDIVALLHGGGPSGQAGALRLAIARALIEVTPEDRPALKSAGFLTRDARAVERKKYGLKKARKASQYSKR.

This sequence belongs to the universal ribosomal protein uS9 family.

The polypeptide is Small ribosomal subunit protein uS9 (Rhodococcus opacus (strain B4)).